A 274-amino-acid chain; its full sequence is 2,3,4,5-tetrahydropyridine-2,6-dicarboxylate N-succinyltransferase (274 aa).

The substrate site is built by arginine 107 and aspartate 144.

It belongs to the transferase hexapeptide repeat family. Homotrimer.

The protein localises to the cytoplasm. The enzyme catalyses (S)-2,3,4,5-tetrahydrodipicolinate + succinyl-CoA + H2O = (S)-2-succinylamino-6-oxoheptanedioate + CoA. It participates in amino-acid biosynthesis; L-lysine biosynthesis via DAP pathway; LL-2,6-diaminopimelate from (S)-tetrahydrodipicolinate (succinylase route): step 1/3. The chain is 2,3,4,5-tetrahydropyridine-2,6-dicarboxylate N-succinyltransferase from Cereibacter sphaeroides (strain ATCC 17023 / DSM 158 / JCM 6121 / CCUG 31486 / LMG 2827 / NBRC 12203 / NCIMB 8253 / ATH 2.4.1.) (Rhodobacter sphaeroides).